We begin with the raw amino-acid sequence, 120 residues long: Large ribosomal subunit protein bL19 (120 aa).

It belongs to the bacterial ribosomal protein bL19 family.

Its function is as follows. This protein is located at the 30S-50S ribosomal subunit interface and may play a role in the structure and function of the aminoacyl-tRNA binding site. The polypeptide is Large ribosomal subunit protein bL19 (Cyanothece sp. (strain PCC 7425 / ATCC 29141)).